The sequence spans 65 residues: Prokaryotic ubiquitin-like protein Pup (65 aa).

A compositionally biased stretch (basic and acidic residues) spans 1 to 13; sequence MAQEQKQPRKSSE. The disordered stretch occupies residues 1-34; sequence MAQEQKQPRKSSEADEAVEAVAETDVSERKEALD. An ARC ATPase binding region spans residues 21–59; sequence VAETDVSERKEALDSDVDDILDEIDDVLETNAEDFVKSF. The stretch at 25 to 49 forms a coiled coil; it reads DVSERKEALDSDVDDILDEIDDVLE. Glu65 is covalently cross-linked (Isoglutamyl lysine isopeptide (Glu-Lys) (interchain with K-? in acceptor proteins)).

This sequence belongs to the prokaryotic ubiquitin-like protein family. In terms of assembly, strongly interacts with the proteasome-associated ATPase ARC through a hydrophobic interface; the interacting region of Pup lies in its C-terminal half. There is one Pup binding site per ARC hexamer ring.

It participates in protein degradation; proteasomal Pup-dependent pathway. Protein modifier that is covalently attached to lysine residues of substrate proteins, thereby targeting them for proteasomal degradation. The tagging system is termed pupylation. This is Prokaryotic ubiquitin-like protein Pup from Nocardioides sp. (strain ATCC BAA-499 / JS614).